We begin with the raw amino-acid sequence, 680 residues long: Chaperone protein dnaK3 (680 aa).

Threonine 205 is modified (phosphothreonine; by autocatalysis). The interval glycine 640–tryptophan 680 is disordered.

It belongs to the heat shock protein 70 family.

Its function is as follows. Acts as a chaperone. This is Chaperone protein dnaK3 (dnaK3) from Thermosynechococcus vestitus (strain NIES-2133 / IAM M-273 / BP-1).